We begin with the raw amino-acid sequence, 688 residues long: Protein SDA1 homolog (688 aa).

3 positions are modified to phosphoserine: Ser-232, Ser-234, and Ser-236. Positions 254 to 318 (KKSSKNKKKL…ERFEVKMMLM (65 aa)) form a coiled coil. The segment covering 484–498 (VENEEENAEGDEDGW) has biased composition (acidic residues). Residues 484–524 (VENEEENAEGDEDGWESASLSDEADSDGEWVDVHHSSDEEQ) are disordered. The span at 514-524 (VDVHHSSDEEQ) shows a compositional bias: basic and acidic residues. Phosphoserine is present on residues Ser-586 and Ser-596. The segment at 605–688 (KKPKSDKETR…ALLKKRKRMK (84 aa)) is disordered. The segment covering 668–681 (SFREKQLALRDALL) has biased composition (basic and acidic residues).

It belongs to the SDA1 family.

Its subcellular location is the nucleus. The protein resides in the nucleolus. Functionally, required for 60S pre-ribosomal subunits export to the cytoplasm. The protein is Protein SDA1 homolog (SDAD1) of Bos taurus (Bovine).